Here is a 350-residue protein sequence, read N- to C-terminus: Small-conductance mechanosensitive channel MscMJ (350 aa).

5 consecutive transmembrane segments (helical) span residues 10 to 30 (ISNI…GKIV), 59 to 79 (LPII…FLIL), 91 to 111 (VKVV…DGIF), 130 to 150 (IIKP…ILTA), and 154 to 174 (VGYD…ALAL).

This sequence belongs to the MscS (TC 1.A.23) family.

It is found in the cell membrane. Functionally, small-conductance mechanosensitive channel that opens in response to stretch forces in the membrane lipid bilayer. Exhibits a sixfold preference for cations over anions. Non-rectifying. This Methanocaldococcus jannaschii (strain ATCC 43067 / DSM 2661 / JAL-1 / JCM 10045 / NBRC 100440) (Methanococcus jannaschii) protein is Small-conductance mechanosensitive channel MscMJ.